Here is a 314-residue protein sequence, read N- to C-terminus: DNA topoisomerase 1 (314 aa).

Residues 73 to 314 (GKMHVQRRNS…TDYITNTQTV (242 aa)) form the Topo IB-type catalytic domain. Tyr-273 acts as the O-(3'-phospho-DNA)-tyrosine intermediate in catalysis.

It belongs to the type IB topoisomerase family.

The catalysed reaction is ATP-independent breakage of single-stranded DNA, followed by passage and rejoining.. In terms of biological role, releases the supercoiling and torsional tension of DNA introduced during the DNA replication and transcription by transiently cleaving and rejoining one strand of the DNA duplex. Introduces a single-strand break via transesterification at a target site in duplex DNA. The scissile phosphodiester is attacked by the catalytic tyrosine of the enzyme, resulting in the formation of a DNA-(3'-phosphotyrosyl)-enzyme intermediate and the expulsion of a 5'-OH DNA strand. The free DNA strand then undergoes passage around the unbroken strand thus removing DNA supercoils. Finally, in the religation step, the DNA 5'-OH attacks the covalent intermediate to expel the active-site tyrosine and restore the DNA phosphodiester backbone. The protein is DNA topoisomerase 1 (TOP1) of Oryctolagus cuniculus (Rabbit).